The following is an 89-amino-acid chain: Small ribosomal subunit protein uS15 (89 aa).

A disordered region spans residues 1–25 (MSLDTTEKQQLINTHQTHGTDTGSA). The span at 8 to 25 (KQQLINTHQTHGTDTGSA) shows a compositional bias: polar residues.

This sequence belongs to the universal ribosomal protein uS15 family. In terms of assembly, part of the 30S ribosomal subunit. Forms a bridge to the 50S subunit in the 70S ribosome, contacting the 23S rRNA.

In terms of biological role, one of the primary rRNA binding proteins, it binds directly to 16S rRNA where it helps nucleate assembly of the platform of the 30S subunit by binding and bridging several RNA helices of the 16S rRNA. Forms an intersubunit bridge (bridge B4) with the 23S rRNA of the 50S subunit in the ribosome. The sequence is that of Small ribosomal subunit protein uS15 from Synechococcus sp. (strain CC9902).